Here is a 466-residue protein sequence, read N- to C-terminus: Glutamate--tRNA ligase (466 aa).

Positions 10–20 (PSPTGYLHVGG) match the 'HIGH' region motif. 4 residues coordinate Zn(2+): C99, C101, C126, and D128. Residues 237–241 (RLSKR) carry the 'KMSKS' region motif. K240 contacts ATP.

It belongs to the class-I aminoacyl-tRNA synthetase family. Glutamate--tRNA ligase type 1 subfamily. Monomer. Requires Zn(2+) as cofactor.

The protein localises to the cytoplasm. The catalysed reaction is tRNA(Glu) + L-glutamate + ATP = L-glutamyl-tRNA(Glu) + AMP + diphosphate. In terms of biological role, catalyzes the attachment of glutamate to tRNA(Glu) in a two-step reaction: glutamate is first activated by ATP to form Glu-AMP and then transferred to the acceptor end of tRNA(Glu). This is Glutamate--tRNA ligase from Geobacter sulfurreducens (strain ATCC 51573 / DSM 12127 / PCA).